Reading from the N-terminus, the 692-residue chain is Elongation factor G (692 aa).

Residues 8-282 form the tr-type G domain; the sequence is EKTRNIGIMA…AVIDYLPSPL (275 aa). GTP is bound by residues 17–24, 81–85, and 135–138; these read AHVDAGKT, DTPGH, and NKMD.

It belongs to the TRAFAC class translation factor GTPase superfamily. Classic translation factor GTPase family. EF-G/EF-2 subfamily.

It is found in the cytoplasm. Functionally, catalyzes the GTP-dependent ribosomal translocation step during translation elongation. During this step, the ribosome changes from the pre-translocational (PRE) to the post-translocational (POST) state as the newly formed A-site-bound peptidyl-tRNA and P-site-bound deacylated tRNA move to the P and E sites, respectively. Catalyzes the coordinated movement of the two tRNA molecules, the mRNA and conformational changes in the ribosome. The sequence is that of Elongation factor G from Streptococcus agalactiae serotype Ia (strain ATCC 27591 / A909 / CDC SS700).